Reading from the N-terminus, the 138-residue chain is MNNKFKDFFGFGDNDSYEERDAYEEHYDEQEEMQNSNRPTNSRDSNVVSIKAGQAGSGPSKIVLYEPRVYSDAKEVAQNLLNQRAIIINFSRMDDASARRVVDFITGTVYALNGEIQRIGDKIFLATPPKFETDGKIT.

The disordered stretch occupies residues 1 to 59; it reads MNNKFKDFFGFGDNDSYEERDAYEEHYDEQEEMQNSNRPTNSRDSNVVSIKAGQAGSGP. Residues 33–48 show a composition bias toward polar residues; that stretch reads MQNSNRPTNSRDSNVV.

The protein belongs to the SepF family. In terms of assembly, homodimer. Interacts with FtsZ.

Its subcellular location is the cytoplasm. Cell division protein that is part of the divisome complex and is recruited early to the Z-ring. Probably stimulates Z-ring formation, perhaps through the cross-linking of FtsZ protofilaments. Its function overlaps with FtsA. This Lactobacillus delbrueckii subsp. bulgaricus (strain ATCC 11842 / DSM 20081 / BCRC 10696 / JCM 1002 / NBRC 13953 / NCIMB 11778 / NCTC 12712 / WDCM 00102 / Lb 14) protein is Cell division protein SepF.